Here is a 328-residue protein sequence, read N- to C-terminus: G2/mitotic-specific cyclin-2 (328 aa).

Belongs to the cyclin family. Cyclin AB subfamily. Interacts with the CDC2 protein kinase to form a serine/threonine kinase holoenzyme complex also known as maturation promoting factor (MPF). The cyclin subunit imparts substrate specificity to the complex. In terms of tissue distribution, only expressed in organs with dividing cells.

Its function is as follows. Essential for the control of the cell cycle at the G2/M (mitosis) transition. In Medicago sativa (Alfalfa), this protein is G2/mitotic-specific cyclin-2.